The sequence spans 126 residues: Glycine cleavage system H protein (126 aa).

Residues 22–104 enclose the Lipoyl-binding domain; sequence KAYIGITSFA…YEQAWMIVVE (83 aa). K63 is modified (N6-lipoyllysine).

This sequence belongs to the GcvH family. As to quaternary structure, the glycine cleavage system is composed of four proteins: P, T, L and H. The cofactor is (R)-lipoate.

Functionally, the glycine cleavage system catalyzes the degradation of glycine. The H protein shuttles the methylamine group of glycine from the P protein to the T protein. Is also involved in protein lipoylation via its role as an octanoyl/lipoyl carrier protein intermediate. This is Glycine cleavage system H protein from Brevibacillus brevis (strain 47 / JCM 6285 / NBRC 100599).